The sequence spans 412 residues: Multifunctional CCA protein (412 aa).

Residues G8 and R11 each coordinate ATP. Residues G8 and R11 each coordinate CTP. 2 residues coordinate Mg(2+): E21 and D23. ATP-binding residues include R91, R137, and R140. CTP contacts are provided by R91, R137, and R140. The region spanning 228 to 329 is the HD domain; that stretch reads CGIHTLMSLQ…WRLLQRLDVL (102 aa).

This sequence belongs to the tRNA nucleotidyltransferase/poly(A) polymerase family. Bacterial CCA-adding enzyme type 1 subfamily. As to quaternary structure, monomer. Can also form homodimers and oligomers. Mg(2+) is required as a cofactor. The cofactor is Ni(2+).

The catalysed reaction is a tRNA precursor + 2 CTP + ATP = a tRNA with a 3' CCA end + 3 diphosphate. It carries out the reaction a tRNA with a 3' CCA end + 2 CTP + ATP = a tRNA with a 3' CCACCA end + 3 diphosphate. In terms of biological role, catalyzes the addition and repair of the essential 3'-terminal CCA sequence in tRNAs without using a nucleic acid template. Adds these three nucleotides in the order of C, C, and A to the tRNA nucleotide-73, using CTP and ATP as substrates and producing inorganic pyrophosphate. tRNA 3'-terminal CCA addition is required both for tRNA processing and repair. Also involved in tRNA surveillance by mediating tandem CCA addition to generate a CCACCA at the 3' terminus of unstable tRNAs. While stable tRNAs receive only 3'-terminal CCA, unstable tRNAs are marked with CCACCA and rapidly degraded. The protein is Multifunctional CCA protein of Acinetobacter baumannii (strain SDF).